The following is a 334-amino-acid chain: MKVKVGINGYGTIGKRVGYAVSKQADMELVGVAKTKPDFEAYRAKELGIPVYAASPDFVPRFEKVGFEIVGTLEDLLEKVDVIVDATPGGMGEKNKALYEKAGVKAIFQGGEKASVAEVSFVAQANYEKALGKDYVRVVSCNTTGLTRTLNAIKDYIDYVYAVMIRRAADPNDIKRGPVNAIKPSVEVPSHHGPDVQTVIPINIETMAFIVPTTLMHVHSVMVELKKPLTREDVIKIFENTTRVLLFEKERGFDSTAQLIEFARDLHREWNNLYEIGVWKESISVKGNRLFYIQAVHQESDVVPENIDAIRAMFELADKWESIKKTNKSLGILK.

NAD(+) contacts are provided by residues 12-13 and G111; that span reads TI. D-glyceraldehyde 3-phosphate is bound at residue 140 to 142; the sequence is SCN. Catalysis depends on C141, which acts as the Nucleophile. R167 lines the NAD(+) pocket. D-glyceraldehyde 3-phosphate is bound at residue 192–193; it reads HG. Residue Q298 participates in NAD(+) binding.

The protein belongs to the glyceraldehyde-3-phosphate dehydrogenase family. Homotetramer.

The protein resides in the cytoplasm. It carries out the reaction D-glyceraldehyde 3-phosphate + phosphate + NADP(+) = (2R)-3-phospho-glyceroyl phosphate + NADPH + H(+). The catalysed reaction is D-glyceraldehyde 3-phosphate + phosphate + NAD(+) = (2R)-3-phospho-glyceroyl phosphate + NADH + H(+). Its pathway is carbohydrate degradation; glycolysis; pyruvate from D-glyceraldehyde 3-phosphate: step 1/5. The polypeptide is Glyceraldehyde-3-phosphate dehydrogenase (Thermococcus sibiricus (strain DSM 12597 / MM 739)).